A 544-amino-acid chain; its full sequence is Chaperonin GroEL 3 (544 aa).

Residues threonine 30–proline 33, lysine 51, aspartate 87–threonine 91, glycine 415, and aspartate 496 contribute to the ATP site.

Belongs to the chaperonin (HSP60) family. As to quaternary structure, forms a cylinder of 14 subunits composed of two heptameric rings stacked back-to-back. Interacts with the co-chaperonin GroES.

The protein resides in the cytoplasm. It catalyses the reaction ATP + H2O + a folded polypeptide = ADP + phosphate + an unfolded polypeptide.. Its function is as follows. Together with its co-chaperonin GroES, plays an essential role in assisting protein folding. The GroEL-GroES system forms a nano-cage that allows encapsulation of the non-native substrate proteins and provides a physical environment optimized to promote and accelerate protein folding. The protein is Chaperonin GroEL 3 of Rhizobium etli (strain ATCC 51251 / DSM 11541 / JCM 21823 / NBRC 15573 / CFN 42).